The chain runs to 411 residues: Glycerol-3-phosphate dehydrogenase [NAD(+)] (411 aa).

Residues 71-76 (GSGNWG), F103, and F159 each bind NAD(+). K182 is a binding site for substrate. A215 contributes to the NAD(+) binding site. The active-site Proton acceptor is K275. NAD(+) is bound by residues R340 and Q369. 340–341 (RN) contacts substrate.

Belongs to the NAD-dependent glycerol-3-phosphate dehydrogenase family.

The catalysed reaction is sn-glycerol 3-phosphate + NAD(+) = dihydroxyacetone phosphate + NADH + H(+). This is Glycerol-3-phosphate dehydrogenase [NAD(+)] (GPD) from Lachancea thermotolerans (Yeast).